Here is a 206-residue protein sequence, read N- to C-terminus: Small ribosomal subunit protein uS4 (206 aa).

The S4 RNA-binding domain maps to Arg-96–Lys-156.

It belongs to the universal ribosomal protein uS4 family. Part of the 30S ribosomal subunit. Contacts protein S5. The interaction surface between S4 and S5 is involved in control of translational fidelity.

In terms of biological role, one of the primary rRNA binding proteins, it binds directly to 16S rRNA where it nucleates assembly of the body of the 30S subunit. With S5 and S12 plays an important role in translational accuracy. The chain is Small ribosomal subunit protein uS4 from Buchnera aphidicola subsp. Schizaphis graminum (strain Sg).